Consider the following 445-residue polypeptide: Glutamate-1-semialdehyde 2,1-aminomutase (445 aa).

The residue at position 263 (lysine 263) is an N6-(pyridoxal phosphate)lysine.

Belongs to the class-III pyridoxal-phosphate-dependent aminotransferase family. HemL subfamily. Pyridoxal 5'-phosphate is required as a cofactor.

Its subcellular location is the cytoplasm. It carries out the reaction (S)-4-amino-5-oxopentanoate = 5-aminolevulinate. It participates in porphyrin-containing compound metabolism; protoporphyrin-IX biosynthesis; 5-aminolevulinate from L-glutamyl-tRNA(Glu): step 2/2. The protein is Glutamate-1-semialdehyde 2,1-aminomutase of Halorubrum lacusprofundi (strain ATCC 49239 / DSM 5036 / JCM 8891 / ACAM 34).